The primary structure comprises 546 residues: MMMASKDAPQSADGASGAGQLVPEVNTADPLPMEPVAGPTTAVATAGQVNMIDPWIVNNFVQSPQGEFTISPNNTPGDILFDLQLGPHLNPFLSHLSQMYNGWVGNMRVRILLAGNAFSAGKIIVCCVPPGFTSSSLTIAQATLFPHVIADVRTLEPIEMPLEDVRNVLYHTNDNQPTMRLVCMLYTPLRTGGGSGNSDSFVVAGRVLTAPSSDFSFLFLVPPTIEQKTRAFTVPNIPLQTLSNSRFPSLIQGMILSPDASQVVQFQNGRCLIDGQLLGTTPATSGQLFRVRGKINQGARTLNLTEVDGKPFMAFDSPAPVGFPDFGKCDWHMRISKTPNNTGSGDPMRSVSVQTNVQGFVPHLGSIQFDEVFNHPTGDYIGTIEWISQPSTPPGTDINLWEIPDYGSSLSQAANLAPPVFPPGFGEALVYFVSAFPGPNNRSAPNDVPCLLPQEYITHFVSEQAPTMGDAALLHYVDPDTNRNLGEFKLYPGGYLTCVPNGVGAGPQQLPLNGVFLFVSWVSRFYQLKPVGTASTARGRLGVRRI.

Positions 1–38 (MMMASKDAPQSADGASGAGQLVPEVNTADPLPMEPVAG) are disordered. Residues 1–226 (MMMASKDAPQ…FLFLVPPTIE (226 aa)) form a shell domain region. The interval 227 to 279 (QKTRAFTVPNIPLQTLSNSRFPSLIQGMILSPDASQVVQFQNGRCLIDGQLLG) is P1 sub-domain 1. A protruding domain region spans residues 227–545 (QKTRAFTVPN…TARGRLGVRR (319 aa)). The tract at residues 280 to 416 (TTPATSGQLF…GSSLSQAANL (137 aa)) is P2 sub-domain. The segment at 417–546 (APPVFPPGFG…ARGRLGVRRI (130 aa)) is P1 sub-domain 2. Residues 538–545 (RGRLGVRR) form a plays a role in binding to host histo-blood group structures antigens and in the formation of P-particles region.

The protein belongs to the caliciviridae capsid protein family. As to quaternary structure, homodimer. Homomultimer. Interacts with the minor capsid protein VP2. Interacts (via C-terminus) with host type I histo-blood group structures antigens at the surface of target cells. In terms of processing, may be cleaved by host protease to generate soluble capsid protein. Assembled capsid cannot be cleaved.

The protein resides in the virion. It is found in the host cytoplasm. Capsid protein self assembles to form an icosahedral capsid with a T=3 symmetry, about 38 nm in diameter, and consisting of 180 capsid proteins. A smaller form of capsid with a diameter of 23 nm might be capsid proteins assembled as icosahedron with T=1 symmetry. The capsid encapsulates the genomic RNA and is decorated with VP2 proteins. Attaches virion to target cells by binding histo-blood group antigens (HBGAs) present on gastroduodenal epithelial cells. Functionally, the soluble capsid protein may play a role in viral immunoevasion. This chain is Capsid protein VP1, found in Southampton virus (strain GI/Human/United Kingdom/Southampton/1991) (SHV).